Reading from the N-terminus, the 202-residue chain is uncharacterized protein (202 aa).

Residues 18–38 (FLIFLIFLSVLGCGITISGCI) traverse the membrane as a helical segment.

The protein localises to the membrane. This is an uncharacterized protein from Methanocaldococcus jannaschii (strain ATCC 43067 / DSM 2661 / JAL-1 / JCM 10045 / NBRC 100440) (Methanococcus jannaschii).